The following is a 177-amino-acid chain: Large ribosomal subunit protein uL6 (177 aa).

Residues 152-171 (RPPEPYKGKGVRYDDEEVRR) show a composition bias toward basic and acidic residues. Residues 152–177 (RPPEPYKGKGVRYDDEEVRRKEAKKK) form a disordered region.

The protein belongs to the universal ribosomal protein uL6 family. In terms of assembly, part of the 50S ribosomal subunit.

In terms of biological role, this protein binds to the 23S rRNA, and is important in its secondary structure. It is located near the subunit interface in the base of the L7/L12 stalk, and near the tRNA binding site of the peptidyltransferase center. This Shewanella oneidensis (strain ATCC 700550 / JCM 31522 / CIP 106686 / LMG 19005 / NCIMB 14063 / MR-1) protein is Large ribosomal subunit protein uL6.